The primary structure comprises 455 residues: Ornithine decarboxylase (455 aa).

An N6-(pyridoxal phosphate)lysine modification is found at lysine 67. Pyridoxal 5'-phosphate-binding positions include serine 197, glycine 234, and 271-274; that span reads EPGR. Phosphoserine; by CK2 is present on serine 297. 325–326 contributes to the substrate binding site; sequence YD. Catalysis depends on cysteine 354, which acts as the Proton donor; shared with dimeric partner. At cysteine 354 the chain carries S-nitrosocysteine. Aspartate 355 serves as a coordination point for substrate. Tyrosine 383 provides a ligand contact to pyridoxal 5'-phosphate.

Belongs to the Orn/Lys/Arg decarboxylase class-II family. Homodimer. Only the dimer is catalytically active, as the active sites are constructed of residues from both monomers. The cofactor is pyridoxal 5'-phosphate.

It carries out the reaction L-ornithine + H(+) = putrescine + CO2. It participates in amine and polyamine biosynthesis; putrescine biosynthesis via L-ornithine pathway; putrescine from L-ornithine: step 1/1. Inhibited by antizymes (AZs) OAZ1, OAZ2 and OAZ3 in response to polyamine levels. AZs inhibit the assembly of the functional homodimer by binding to ODC monomers. Additionally, OAZ1 targets ODC monomers for ubiquitin-independent proteolytic destruction by the 26S proteasome. In terms of biological role, catalyzes the first and rate-limiting step of polyamine biosynthesis that converts ornithine into putrescine, which is the precursor for the polyamines, spermidine and spermine. Polyamines are essential for cell proliferation and are implicated in cellular processes, ranging from DNA replication to apoptosis. This chain is Ornithine decarboxylase (ODC1), found in Cricetulus griseus (Chinese hamster).